A 647-amino-acid polypeptide reads, in one-letter code: DNA mismatch repair protein MutL (647 aa).

Positions 346–378 are disordered; sequence QTVHAPRSAAPRVSERASDEPPAWQPSPTSGEP.

Belongs to the DNA mismatch repair MutL/HexB family.

Its function is as follows. This protein is involved in the repair of mismatches in DNA. It is required for dam-dependent methyl-directed DNA mismatch repair. May act as a 'molecular matchmaker', a protein that promotes the formation of a stable complex between two or more DNA-binding proteins in an ATP-dependent manner without itself being part of a final effector complex. This chain is DNA mismatch repair protein MutL, found in Limosilactobacillus fermentum (strain NBRC 3956 / LMG 18251) (Lactobacillus fermentum).